The sequence spans 362 residues: DNA polymerase IV (362 aa).

A UmuC domain is found at 6 to 187 (IIHVDMDAFY…LPVSSFHGVG (182 aa)). Positions 10 and 105 each coordinate Mg(2+). E106 is an active-site residue.

It belongs to the DNA polymerase type-Y family. In terms of assembly, monomer. Mg(2+) serves as cofactor.

It is found in the cytoplasm. The catalysed reaction is DNA(n) + a 2'-deoxyribonucleoside 5'-triphosphate = DNA(n+1) + diphosphate. In terms of biological role, poorly processive, error-prone DNA polymerase involved in untargeted mutagenesis. Copies undamaged DNA at stalled replication forks, which arise in vivo from mismatched or misaligned primer ends. These misaligned primers can be extended by PolIV. Exhibits no 3'-5' exonuclease (proofreading) activity. May be involved in translesional synthesis, in conjunction with the beta clamp from PolIII. The protein is DNA polymerase IV of Leptospira interrogans serogroup Icterohaemorrhagiae serovar copenhageni (strain Fiocruz L1-130).